A 242-amino-acid polypeptide reads, in one-letter code: 1-(5-phosphoribosyl)-5-[(5-phosphoribosylamino)methylideneamino] imidazole-4-carboxamide isomerase (242 aa).

Aspartate 8 acts as the Proton acceptor in catalysis. Aspartate 129 (proton donor) is an active-site residue.

This sequence belongs to the HisA/HisF family.

The protein resides in the cytoplasm. It catalyses the reaction 1-(5-phospho-beta-D-ribosyl)-5-[(5-phospho-beta-D-ribosylamino)methylideneamino]imidazole-4-carboxamide = 5-[(5-phospho-1-deoxy-D-ribulos-1-ylimino)methylamino]-1-(5-phospho-beta-D-ribosyl)imidazole-4-carboxamide. Its pathway is amino-acid biosynthesis; L-histidine biosynthesis; L-histidine from 5-phospho-alpha-D-ribose 1-diphosphate: step 4/9. The sequence is that of 1-(5-phosphoribosyl)-5-[(5-phosphoribosylamino)methylideneamino] imidazole-4-carboxamide isomerase from Syntrophus aciditrophicus (strain SB).